We begin with the raw amino-acid sequence, 793 residues long: Sucrose synthase (793 aa).

The tract at residues 259–738 is GT-B glycosyltransferase; it reads MILNIAIISP…AIKRVTEKYS (480 aa).

The protein belongs to the glycosyltransferase 1 family. Homotetramer.

The enzyme catalyses an NDP-alpha-D-glucose + D-fructose = a ribonucleoside 5'-diphosphate + sucrose + H(+). In terms of biological role, catalyzes the reversible conversion of sucrose and a nucleotide disphosphate (NDP) into fructose and NDP-glucose; although the reaction is freely reversible in vitro, the physiological reaction seems to be sucrose cleavage. Unlike characterized plant enzymes prefers ADP as a cosubstrate, whereas plants prefer UDP. Its preference for ADP over UDP suggests it may directly link sucrose and glycogen metabolism. This is Sucrose synthase from Melioribacter roseus (strain JCM 17771 / P3M-2).